Consider the following 484-residue polypeptide: ATP synthase subunit beta (484 aa).

The disordered stretch occupies residues 104 to 123 (ERGPIGSKQTMPIHADAPPF). Residue 156-163 (GGAGVGKT) participates in ATP binding.

The protein belongs to the ATPase alpha/beta chains family. In terms of assembly, F-type ATPases have 2 components, CF(1) - the catalytic core - and CF(0) - the membrane proton channel. CF(1) has five subunits: alpha(3), beta(3), gamma(1), delta(1), epsilon(1). CF(0) has three main subunits: a(1), b(2) and c(9-12). The alpha and beta chains form an alternating ring which encloses part of the gamma chain. CF(1) is attached to CF(0) by a central stalk formed by the gamma and epsilon chains, while a peripheral stalk is formed by the delta and b chains.

It localises to the cell inner membrane. The enzyme catalyses ATP + H2O + 4 H(+)(in) = ADP + phosphate + 5 H(+)(out). In terms of biological role, produces ATP from ADP in the presence of a proton gradient across the membrane. The catalytic sites are hosted primarily by the beta subunits. The protein is ATP synthase subunit beta of Zymomonas mobilis subsp. mobilis (strain ATCC 31821 / ZM4 / CP4).